The chain runs to 403 residues: Phosphoglycerate kinase (403 aa).

Residues 21-23, Arg36, 59-62, Arg119, and Arg159 each bind substrate; these read DFN and HLGR. ATP contacts are provided by residues Lys214, Gly301, Glu332, and 359–362; that span reads GGDS.

This sequence belongs to the phosphoglycerate kinase family. As to quaternary structure, monomer.

Its subcellular location is the cytoplasm. It catalyses the reaction (2R)-3-phosphoglycerate + ATP = (2R)-3-phospho-glyceroyl phosphate + ADP. It participates in carbohydrate degradation; glycolysis; pyruvate from D-glyceraldehyde 3-phosphate: step 2/5. The sequence is that of Phosphoglycerate kinase from Lactobacillus delbrueckii subsp. bulgaricus (strain ATCC 11842 / DSM 20081 / BCRC 10696 / JCM 1002 / NBRC 13953 / NCIMB 11778 / NCTC 12712 / WDCM 00102 / Lb 14).